Reading from the N-terminus, the 313-residue chain is Olfactory receptor 4E2 (313 aa).

The Extracellular portion of the chain corresponds to 1-25 (MDSLNQTRVTEFVFLGLTDNRVLEM). The N-linked (GlcNAc...) asparagine glycan is linked to N5. A helical membrane pass occupies residues 26 to 49 (LFFMAFSAIYMLTLSGNILIIIAT). Topologically, residues 50 to 57 (VFTPSLHT) are cytoplasmic. Residues 58–79 (PMYFFLSNLSFIDICHSSVTVP) form a helical membrane-spanning segment. Over 80 to 100 (KMLEGLLLERKTISFDNCITQ) the chain is Extracellular. An intrachain disulfide couples C97 to C179. Residues 101–120 (LFFLHLFACAEIFLLIIVAY) form a helical membrane-spanning segment. H105 and C109 together coordinate Cu cation. Residues 121–139 (DRYVAICTPLHYPNVMNMR) are Cytoplasmic-facing. The chain crosses the membrane as a helical span at residues 140 to 158 (VCIQLVFALWLGGTVHSLG). Over 159–195 (QTFLTIRLPYCGPNIIDSYFCDVPLVIKLACTDTYLT) the chain is Extracellular. The chain crosses the membrane as a helical span at residues 196-219 (GILIVTNSGTISLSCFLAVVTSYM). At 220-235 (VILVSLRKHSAEGRQK) the chain is on the cytoplasmic side. Residues 236 to 258 (ALSTCSAHFMVVALFFGPCIFIY) traverse the membrane as a helical segment. Residues 259-269 (TRPDTSFSIDK) lie on the Extracellular side of the membrane. R260 contacts Cu cation. The helical transmembrane segment at 270 to 289 (VVSVFYTVVTPLLNPFIYTL) threads the bilayer. At 290–313 (RNEEVKSAMKQLRQRQVFFTKSYT) the chain is on the cytoplasmic side.

It belongs to the G-protein coupled receptor 1 family.

It is found in the cell membrane. With respect to regulation, copper binding enhances receptor activity in response to odorant binding. Olfactory receptor that is activated by the binding of organosulfur odorants with thioether groups such as (methylthio)methanethiol (MTMT) and bis(methylthiomethyl) disulfide. Also binds odorants cis-cyclooctene and tert-butyl mercaptan. The activity of this receptor is mediated by G proteins which activate adenylyl cyclase. The sequence is that of Olfactory receptor 4E2 from Homo sapiens (Human).